The chain runs to 217 residues: Urease accessory protein UreE (217 aa).

The interval 148 to 217 (AYGEAAAHGH…DHDHGSGHHH (70 aa)) is disordered. A compositionally biased stretch (basic and acidic residues) spans 160-171 (AGHDHAHDHDHG). Over residues 193–202 (AAAPAPHVHG) the composition is skewed to low complexity. Over residues 206 to 217 (GHDHDHGSGHHH) the composition is skewed to basic and acidic residues.

This sequence belongs to the UreE family.

Its subcellular location is the cytoplasm. Involved in urease metallocenter assembly. Binds nickel. Probably functions as a nickel donor during metallocenter assembly. In Methylibium petroleiphilum (strain ATCC BAA-1232 / LMG 22953 / PM1), this protein is Urease accessory protein UreE.